The primary structure comprises 201 residues: FMN-dependent NADH:quinone oxidoreductase (201 aa).

Residues Ser-9 and Ser-16–Ser-18 contribute to the FMN site.

Belongs to the azoreductase type 1 family. As to quaternary structure, homodimer. FMN serves as cofactor.

It carries out the reaction 2 a quinone + NADH + H(+) = 2 a 1,4-benzosemiquinone + NAD(+). The catalysed reaction is N,N-dimethyl-1,4-phenylenediamine + anthranilate + 2 NAD(+) = 2-(4-dimethylaminophenyl)diazenylbenzoate + 2 NADH + 2 H(+). Its function is as follows. Quinone reductase that provides resistance to thiol-specific stress caused by electrophilic quinones. Also exhibits azoreductase activity. Catalyzes the reductive cleavage of the azo bond in aromatic azo compounds to the corresponding amines. The protein is FMN-dependent NADH:quinone oxidoreductase of Mesomycoplasma hyopneumoniae (strain J / ATCC 25934 / NCTC 10110) (Mycoplasma hyopneumoniae).